A 115-amino-acid chain; its full sequence is Transcription initiation factor IIA subunit 2 (115 aa).

Belongs to the TFIIA subunit 2 family. As to quaternary structure, TFIIA is a heterodimer of the large unprocessed subunit 1 and a small subunit gamma.

The protein localises to the nucleus. In terms of biological role, TFIIA is a component of the transcription machinery of RNA polymerase II and plays an important role in transcriptional activation. TFIIA in a complex with tbp mediates transcriptional activity. This Dictyostelium discoideum (Social amoeba) protein is Transcription initiation factor IIA subunit 2 (gtf2a2).